The sequence spans 116 residues: Aspartate 1-decarboxylase (116 aa).

Residue serine 25 is the Schiff-base intermediate with substrate; via pyruvic acid of the active site. Serine 25 carries the pyruvic acid (Ser) modification. Substrate is bound at residue threonine 57. Catalysis depends on tyrosine 58, which acts as the Proton donor. A substrate-binding site is contributed by 73–75 (GAA).

This sequence belongs to the PanD family. Heterooctamer of four alpha and four beta subunits. Pyruvate is required as a cofactor. Is synthesized initially as an inactive proenzyme, which is activated by self-cleavage at a specific serine bond to produce a beta-subunit with a hydroxyl group at its C-terminus and an alpha-subunit with a pyruvoyl group at its N-terminus.

The protein resides in the cytoplasm. The enzyme catalyses L-aspartate + H(+) = beta-alanine + CO2. The protein operates within cofactor biosynthesis; (R)-pantothenate biosynthesis; beta-alanine from L-aspartate: step 1/1. Functionally, catalyzes the pyruvoyl-dependent decarboxylation of aspartate to produce beta-alanine. The sequence is that of Aspartate 1-decarboxylase from Parabacteroides distasonis (strain ATCC 8503 / DSM 20701 / CIP 104284 / JCM 5825 / NCTC 11152).